A 572-amino-acid polypeptide reads, in one-letter code: Dihydroxy-acid dehydratase (572 aa).

Cys57 lines the [2Fe-2S] cluster pocket. Position 89 (Asp89) interacts with Mg(2+). Cys130 is a [2Fe-2S] cluster binding site. Asp131 and Lys132 together coordinate Mg(2+). Residue Lys132 is modified to N6-carboxylysine. Cys202 contributes to the [2Fe-2S] cluster binding site. Glu453 contacts Mg(2+). Ser479 serves as the catalytic Proton acceptor.

Belongs to the IlvD/Edd family. In terms of assembly, homodimer. [2Fe-2S] cluster serves as cofactor. The cofactor is Mg(2+).

The catalysed reaction is (2R)-2,3-dihydroxy-3-methylbutanoate = 3-methyl-2-oxobutanoate + H2O. The enzyme catalyses (2R,3R)-2,3-dihydroxy-3-methylpentanoate = (S)-3-methyl-2-oxopentanoate + H2O. It functions in the pathway amino-acid biosynthesis; L-isoleucine biosynthesis; L-isoleucine from 2-oxobutanoate: step 3/4. The protein operates within amino-acid biosynthesis; L-valine biosynthesis; L-valine from pyruvate: step 3/4. Its function is as follows. Functions in the biosynthesis of branched-chain amino acids. Catalyzes the dehydration of (2R,3R)-2,3-dihydroxy-3-methylpentanoate (2,3-dihydroxy-3-methylvalerate) into 2-oxo-3-methylpentanoate (2-oxo-3-methylvalerate) and of (2R)-2,3-dihydroxy-3-methylbutanoate (2,3-dihydroxyisovalerate) into 2-oxo-3-methylbutanoate (2-oxoisovalerate), the penultimate precursor to L-isoleucine and L-valine, respectively. In Streptococcus thermophilus (strain CNRZ 1066), this protein is Dihydroxy-acid dehydratase.